We begin with the raw amino-acid sequence, 59 residues long: Cecropin-B1 (59 aa).

The signal sequence occupies residues methionine 1–alanine 23. Leucine 57 carries the leucine amide modification.

Belongs to the cecropin family.

The protein resides in the secreted. In terms of biological role, cecropins have lytic and antibacterial activity against several Gram-positive and Gram-negative bacteria. The polypeptide is Cecropin-B1 (CECB1) (Culex pipiens pipiens (Northern house mosquito)).